A 282-amino-acid polypeptide reads, in one-letter code: DNA-binding transcriptional repressor YiaJ (282 aa).

Basic and acidic residues predominate over residues 1–20; it reads MGKEVMGKKENEMAQEKERP. Residues 1–21 are disordered; it reads MGKEVMGKKENEMAQEKERPA. The HTH iclR-type domain occupies 23–85; sequence SQSLFRGLML…PAAGSYRLTT (63 aa). The H-T-H motif DNA-binding region spans 45–64; it reads LAHLSELAGLNKSTVHRLLQ. An IclR-ED domain is found at 100 to 272; that stretch reads IIHIAAPHLE…AQAISNELGF (173 aa).

Negatively controls the transcription of the yiaKLMNOPQRS operon, which may be involved in the utilization of 2,3-diketo-L-gulonate. This chain is DNA-binding transcriptional repressor YiaJ (yiaJ), found in Escherichia coli (strain K12).